The primary structure comprises 177 residues: ATP synthase subunit b (177 aa).

A helical transmembrane segment spans residues 35–55; that stretch reads FFVVLAIFLIVLAVIGTFVVP.

This sequence belongs to the ATPase B chain family. As to quaternary structure, F-type ATPases have 2 components, F(1) - the catalytic core - and F(0) - the membrane proton channel. F(1) has five subunits: alpha(3), beta(3), gamma(1), delta(1), epsilon(1). F(0) has three main subunits: a(1), b(2) and c(10-14). The alpha and beta chains form an alternating ring which encloses part of the gamma chain. F(1) is attached to F(0) by a central stalk formed by the gamma and epsilon chains, while a peripheral stalk is formed by the delta and b chains.

It localises to the cell membrane. Its function is as follows. F(1)F(0) ATP synthase produces ATP from ADP in the presence of a proton or sodium gradient. F-type ATPases consist of two structural domains, F(1) containing the extramembraneous catalytic core and F(0) containing the membrane proton channel, linked together by a central stalk and a peripheral stalk. During catalysis, ATP synthesis in the catalytic domain of F(1) is coupled via a rotary mechanism of the central stalk subunits to proton translocation. Functionally, component of the F(0) channel, it forms part of the peripheral stalk, linking F(1) to F(0). The polypeptide is ATP synthase subunit b (Mycobacteroides abscessus (strain ATCC 19977 / DSM 44196 / CCUG 20993 / CIP 104536 / JCM 13569 / NCTC 13031 / TMC 1543 / L948) (Mycobacterium abscessus)).